Consider the following 699-residue polypeptide: Polyribonucleotide nucleotidyltransferase (699 aa).

Residues Asp487 and Asp493 each coordinate Mg(2+). In terms of domain architecture, KH spans 554–613; the sequence is PRMLNMKINPEKIRDVIGKGGAVIRALQEETGTVIEIEDDGSITISSVSAEGAQKAKARI. The S1 motif domain maps to 623–691; it reads GKVYEGTVVR…ERGKIRLSMK (69 aa).

Belongs to the polyribonucleotide nucleotidyltransferase family. Mg(2+) serves as cofactor.

The protein localises to the cytoplasm. The enzyme catalyses RNA(n+1) + phosphate = RNA(n) + a ribonucleoside 5'-diphosphate. Involved in mRNA degradation. Catalyzes the phosphorolysis of single-stranded polyribonucleotides processively in the 3'- to 5'-direction. The sequence is that of Polyribonucleotide nucleotidyltransferase from Azoarcus sp. (strain BH72).